The sequence spans 290 residues: Zinc finger matrin-type protein 3 (290 aa).

2 consecutive Matrin-type zinc fingers follow at residues 70-100 (LFCKLCNVTLNSAQQAQAHYQGKNHGKKLRN) and 148-178 (DYCKLCDASFSSPAVAQAHYQGKNHAKRLRL). Disordered regions lie at residues 182–203 (QSHSFSDSAEAGQRRTRKEGSE) and 266–290 (ESKQHKSKVSEQRYRSEMENLGYVQ). The Matrin-type 3 zinc-finger motif lies at 246 to 276 (FYCSMCNVGAGEEVEFRQHLESKQHKSKVSE). Over residues 266 to 283 (ESKQHKSKVSEQRYRSEM) the composition is skewed to basic and acidic residues.

As to quaternary structure, interacts with dsRNA. In terms of tissue distribution, constitutively expressed in brain and testis. Also expressed in lung, kidney and spleen after whole body gamma irradiation.

Its subcellular location is the nucleus. It localises to the nucleolus. Its function is as follows. Acts as a bona fide target gene of p53/TP53. May play a role in the TP53-dependent growth regulatory pathway. May contribute to TP53-mediated apoptosis by regulation of TP53 expression and translocation to the nucleus and nucleolus. The sequence is that of Zinc finger matrin-type protein 3 from Mus musculus (Mouse).